A 1631-amino-acid chain; its full sequence is Ras GTPase-activating-like protein IQGAP3 (1631 aa).

The 116-residue stretch at 34 to 149 folds into the Calponin-homology (CH) domain; sequence LCRLEEAKRW…YCIHALSLFL (116 aa). A Phosphotyrosine modification is found at tyrosine 162. The residue at position 539 (serine 539) is a Phosphoserine. 4 IQ domains span residues 730-759, 760-789, 790-819, and 820-849; these read NVGF…FLRT, WLPA…YFKA, NLDA…YFQK, and NVNS…APHP. The region spanning 1004–1253 is the Ras-GAP domain; sequence YLLLQLFKTA…LKFRKFIHRA (250 aa). A Phosphoserine modification is found at serine 1424.

The chain is Ras GTPase-activating-like protein IQGAP3 (IQGAP3) from Homo sapiens (Human).